The primary structure comprises 56 residues: Large ribosomal subunit protein bL33 (56 aa).

The protein belongs to the bacterial ribosomal protein bL33 family.

This is Large ribosomal subunit protein bL33 from Beutenbergia cavernae (strain ATCC BAA-8 / DSM 12333 / CCUG 43141 / JCM 11478 / NBRC 16432 / NCIMB 13614 / HKI 0122).